The sequence spans 251 residues: Hydroxyacylglutathione hydrolase (251 aa).

Zn(2+) is bound by residues histidine 53, histidine 55, aspartate 57, histidine 58, histidine 110, aspartate 127, and histidine 165.

It belongs to the metallo-beta-lactamase superfamily. Glyoxalase II family. In terms of assembly, monomer. The cofactor is Zn(2+).

It carries out the reaction an S-(2-hydroxyacyl)glutathione + H2O = a 2-hydroxy carboxylate + glutathione + H(+). Its pathway is secondary metabolite metabolism; methylglyoxal degradation; (R)-lactate from methylglyoxal: step 2/2. Thiolesterase that catalyzes the hydrolysis of S-D-lactoyl-glutathione to form glutathione and D-lactic acid. This Yersinia pestis protein is Hydroxyacylglutathione hydrolase.